The primary structure comprises 406 residues: Phosphopentomutase (406 aa).

Mn(2+) is bound by residues aspartate 10, aspartate 305, histidine 310, aspartate 346, histidine 347, and histidine 358.

Belongs to the phosphopentomutase family. Mn(2+) serves as cofactor.

It localises to the cytoplasm. It catalyses the reaction 2-deoxy-alpha-D-ribose 1-phosphate = 2-deoxy-D-ribose 5-phosphate. It carries out the reaction alpha-D-ribose 1-phosphate = D-ribose 5-phosphate. It participates in carbohydrate degradation; 2-deoxy-D-ribose 1-phosphate degradation; D-glyceraldehyde 3-phosphate and acetaldehyde from 2-deoxy-alpha-D-ribose 1-phosphate: step 1/2. Functionally, isomerase that catalyzes the conversion of deoxy-ribose 1-phosphate (dRib-1-P) and ribose 1-phosphate (Rib-1-P) to deoxy-ribose 5-phosphate (dRib-5-P) and ribose 5-phosphate (Rib-5-P), respectively. This is Phosphopentomutase from Rhizobium leguminosarum bv. trifolii (strain WSM2304).